The sequence spans 396 residues: L-lactate dehydrogenase (396 aa).

The FMN hydroxy acid dehydrogenase domain occupies 1-380 (MIISAASDYR…TQDSLVQGLG (380 aa)). Substrate is bound at residue Tyr-24. FMN is bound by residues Ser-106 and Gln-127. Tyr-129 is a substrate binding site. Thr-155 lines the FMN pocket. Arg-164 contributes to the substrate binding site. Lys-251 contacts FMN. Residue His-275 is the Proton acceptor of the active site. Residue Arg-278 coordinates substrate. Residue 306-330 (DSGIRNGLDVVRMIALGADTVLLGR) coordinates FMN.

This sequence belongs to the FMN-dependent alpha-hydroxy acid dehydrogenase family. It depends on FMN as a cofactor.

It is found in the cell inner membrane. It catalyses the reaction (S)-lactate + A = pyruvate + AH2. Catalyzes the conversion of L-lactate to pyruvate. Is coupled to the respiratory chain. This is L-lactate dehydrogenase from Escherichia coli O7:K1 (strain IAI39 / ExPEC).